The chain runs to 244 residues: Ribosomal RNA large subunit methyltransferase E (244 aa).

Residues glycine 81, tryptophan 83, aspartate 109, aspartate 125, and aspartate 149 each coordinate S-adenosyl-L-methionine. Catalysis depends on lysine 189, which acts as the Proton acceptor.

The protein belongs to the class I-like SAM-binding methyltransferase superfamily. RNA methyltransferase RlmE family.

It localises to the cytoplasm. The enzyme catalyses uridine(2552) in 23S rRNA + S-adenosyl-L-methionine = 2'-O-methyluridine(2552) in 23S rRNA + S-adenosyl-L-homocysteine + H(+). Its function is as follows. Specifically methylates the uridine in position 2552 of 23S rRNA at the 2'-O position of the ribose in the fully assembled 50S ribosomal subunit. This is Ribosomal RNA large subunit methyltransferase E from Cereibacter sphaeroides (strain ATCC 17029 / ATH 2.4.9) (Rhodobacter sphaeroides).